The primary structure comprises 270 residues: Large ribosomal subunit protein uL2c (270 aa).

The interval 221-245 is disordered; sequence NPIDHPHGGGEGRAPIGRNQPKTPW.

Belongs to the universal ribosomal protein uL2 family. Part of the 50S ribosomal subunit.

Its subcellular location is the plastid. In Cuscuta gronovii (Common dodder), this protein is Large ribosomal subunit protein uL2c (rpl2).